The primary structure comprises 152 residues: MVKAVAVLNSSEGVSGTYLFTQVGVAPTTVNGNISGLKPGLHGFHVHALGDTTNGCMSTGPHYNPAGKEHGAPEDEVRHAGDLGNITVGEDGTASFTITDKQIPLTGPQSIIGRAVVVHADPDDLGKGGHELSKSTGNAGGRIACGIIGLQG.

Residues H45, H47, and H62 each contribute to the Cu cation site. C56 and C145 are oxidised to a cystine. Positions 62, 70, 79, and 82 each coordinate Zn(2+). Cu cation is bound at residue H119.

The protein belongs to the Cu-Zn superoxide dismutase family. In terms of assembly, homodimer. The cofactor is Cu cation. Zn(2+) is required as a cofactor.

Its subcellular location is the cytoplasm. It carries out the reaction 2 superoxide + 2 H(+) = H2O2 + O2. Its function is as follows. Destroys radicals which are normally produced within the cells and which are toxic to biological systems. This Solanum lycopersicum (Tomato) protein is Superoxide dismutase [Cu-Zn] 1 (SODCC.1).